Consider the following 326-residue polypeptide: Protein-arginine N-acetylglucosaminyltransferase NleB2 (326 aa).

Residues 45 to 47, tyrosine 69, and 216 to 219 contribute to the UDP-N-acetyl-alpha-D-glucosamine site; these read QWF and YLDM. A DXD motif motif is present at residues 218–220; sequence DMD. Position 220 (aspartate 220) interacts with Mn(2+). Glutamate 250 acts as the Proton acceptor in catalysis. Residues asparagine 317 and serine 319 each coordinate Mn(2+). UDP-N-acetyl-alpha-D-glucosamine contacts are provided by residues serine 319 and 324–326; that span reads SSW.

It belongs to the glycosyltransferase NleB family. It depends on Mn(2+) as a cofactor.

Its subcellular location is the secreted. It is found in the host cell. It carries out the reaction L-arginyl-[protein] + UDP-N-acetyl-alpha-D-glucosamine = N(omega)-(N-acetyl-beta-D-glucosaminyl)-L-arginyl-[protein] + UDP + H(+). Its function is as follows. Protein-arginine N-acetylglucosaminyltransferase effector that catalyzes the transfer of a single N-acetylglucosamine (GlcNAc) to a conserved arginine residue of host target proteins. In contrast to NleB1, not able to disrupt TNF signaling in infected cells. Shows a lower enzymatic activity than NleB1. This chain is Protein-arginine N-acetylglucosaminyltransferase NleB2, found in Escherichia coli O145:H28 (strain RM12581).